The chain runs to 491 residues: Cyclin-B1-5 (491 aa).

Positions 275–347 constitute a Cyclin N-terminal domain; it reads DMYSFYKEVE…VKAVPKRELQ (73 aa).

This sequence belongs to the cyclin family. Cyclin AB subfamily. As to expression, expressed in roots, stems and flowers.

The chain is Cyclin-B1-5 (CYCB1-5) from Arabidopsis thaliana (Mouse-ear cress).